The following is a 55-amino-acid chain: MAKGARDKIKLESTAGTGHFYTTTKNKRNMPEKMEIMKFDPVARKHVAYKETKIK.

The span at 1-11 (MAKGARDKIKL) shows a compositional bias: basic and acidic residues. A disordered region spans residues 1 to 24 (MAKGARDKIKLESTAGTGHFYTTT). Residues 14–24 (TAGTGHFYTTT) show a composition bias toward polar residues.

This sequence belongs to the bacterial ribosomal protein bL33 family.

The chain is Large ribosomal subunit protein bL33 from Burkholderia multivorans (strain ATCC 17616 / 249).